Here is a 549-residue protein sequence, read N- to C-terminus: Ankyrin repeat domain-containing protein SOWAHA (549 aa).

An N-terminal signal peptide occupies residues 1 to 17; the sequence is MALAAAAAAAAAGVSQA. Disordered regions lie at residues 82–219 and 235–256; these read KPRP…PCML and EEPG…PLLL. Over residues 203 to 216 the composition is skewed to low complexity; sequence PGPGAAKGPPQQKP. The segment covering 235 to 248 has biased composition (basic and acidic residues); that stretch reads EEPGLRRQLSEEPS. Position 260 is a phosphoserine (Ser260). 2 ANK repeats span residues 345-374 and 384-414; these read SGFT…RSGA and GGYT…QVHV. Residues 513–549 are disordered; sequence PRKKTKIRGGLPAFSEISRRPTPGPLAGLVPSLPPTT.

This sequence belongs to the SOWAH family.

The chain is Ankyrin repeat domain-containing protein SOWAHA (SOWAHA) from Homo sapiens (Human).